We begin with the raw amino-acid sequence, 397 residues long: CCA-adding enzyme (397 aa).

The ATP site is built by Gly26 and Arg29. CTP-binding residues include Gly26 and Arg29. Mg(2+)-binding residues include Asp39 and Asp41. Residues Arg110, Asp153, Arg156, Arg159, and Arg162 each contribute to the ATP site. Residues Arg110, Asp153, Arg156, Arg159, and Arg162 each coordinate CTP.

It belongs to the tRNA nucleotidyltransferase/poly(A) polymerase family. Bacterial CCA-adding enzyme type 3 subfamily. Homodimer. It depends on Mg(2+) as a cofactor.

It carries out the reaction a tRNA precursor + 2 CTP + ATP = a tRNA with a 3' CCA end + 3 diphosphate. It catalyses the reaction a tRNA with a 3' CCA end + 2 CTP + ATP = a tRNA with a 3' CCACCA end + 3 diphosphate. In terms of biological role, catalyzes the addition and repair of the essential 3'-terminal CCA sequence in tRNAs without using a nucleic acid template. Adds these three nucleotides in the order of C, C, and A to the tRNA nucleotide-73, using CTP and ATP as substrates and producing inorganic pyrophosphate. tRNA 3'-terminal CCA addition is required both for tRNA processing and repair. Also involved in tRNA surveillance by mediating tandem CCA addition to generate a CCACCA at the 3' terminus of unstable tRNAs. While stable tRNAs receive only 3'-terminal CCA, unstable tRNAs are marked with CCACCA and rapidly degraded. This is CCA-adding enzyme from Bacillus thuringiensis subsp. konkukian (strain 97-27).